The following is a 629-amino-acid chain: MFYQDPFDVIIIGGGHAGTEAAMAAARMGQQTLLLTHNIDTLGQMSCNPAIGGIGKGHLVKEVDALGGLMAKAIDQAGIQFRILNASKGPAVRATRAQADRVLYRQAVRTALENQPNLMIFQQAVEDLIVENDRVVGAVTQMGLKFRAKAVVLTVGTFLDGKIHIGLDNYSGGRAGDPPSIPLSRRLRELPLRVSRLKTGTPPRIDARTIDFSVLAQQHGDNPMPVFSFMGNASQHPQQVPCYITHTNEKTHDVIRNNLDRSPMYAGVIEGIGPRYCPSIEDKVMRFADRNQHQIFLEPEGLTSNEIYPNGISTSLPFDVQMQIVRSMQGMENAKIVRPGYAIEYDFFDPRDLKPTLESKFIHGLFFAGQINGTTGYEEAAAQGLLAGLNAARLSADKERWAPARSQAYLGVLVDDLCTLGTKEPYRMFTSRAEYRLMLREDNADLRLTEMGRELGLVDDERWARFNEKLENIERERQRLKSTWVTPSAESADEVNAHLTTPLSREASGEDLLRRPEMTYAQLTSLAAFAPALEDEQAAEQVEIQVKYEGYIARQQDEIEKQLRNENTLLPATLDYRQVSGLSNEVIAKLNDHKPASIGQASRISGVTPAAISILLVWLKKQGMLRRSA.

FAD-binding positions include 13 to 18 (GGGHAG), Val-125, and Ser-180. 273 to 287 (GPRYCPSIEDKVMRF) is a binding site for NAD(+). Gln-370 provides a ligand contact to FAD.

Belongs to the MnmG family. Homodimer. Heterotetramer of two MnmE and two MnmG subunits. Requires FAD as cofactor.

The protein localises to the cytoplasm. Functionally, NAD-binding protein involved in the addition of a carboxymethylaminomethyl (cmnm) group at the wobble position (U34) of certain tRNAs, forming tRNA-cmnm(5)s(2)U34. The sequence is that of tRNA uridine 5-carboxymethylaminomethyl modification enzyme MnmG from Salmonella paratyphi A (strain ATCC 9150 / SARB42).